The sequence spans 447 residues: Rab GDP dissociation inhibitor alpha (447 aa).

A Phosphoserine modification is found at Ser-427.

Belongs to the Rab GDI family. Interacts with RHOH. Interacts with the non-phosphorylated forms of RAB1A, RAB3A, RAB5A, RAB5B, RAB5C, RAB8A, RAB8B, RAB10, RAB12, RAB35, and RAB43.

It is found in the cytoplasm. The protein resides in the golgi apparatus. The protein localises to the trans-Golgi network. Its function is as follows. Regulates the GDP/GTP exchange reaction of most Rab proteins by inhibiting the dissociation of GDP from them, and the subsequent binding of GTP to them. Promotes the dissociation of GDP-bound Rab proteins from the membrane and inhibits their activation. Promotes the dissociation of RAB1A, RAB3A, RAB5A and RAB10 from membranes. The sequence is that of Rab GDP dissociation inhibitor alpha (GDI1) from Canis lupus familiaris (Dog).